We begin with the raw amino-acid sequence, 388 residues long: Quinolone resistance protein NorA (388 aa).

12 consecutive transmembrane segments (helical) span residues 5-25 (IFVL…VIPV), 42-62 (LLVA…GTLA), 69-89 (LIIC…AVGH), 99-119 (VIGG…IADI), 129-149 (FGYM…IGGF), 157-177 (MPFY…IVLI), 201-221 (WKVF…LSAF), 239-259 (DISI…IYFF), 269-289 (LTFI…LVFA), 293-313 (WSIM…RPAI), 331-351 (LNST…GALF), and 355-375 (IEAP…IVLI).

This sequence belongs to the major facilitator superfamily. TCR/Tet family.

It is found in the cell membrane. Its function is as follows. Involved in quinolone resistance. May constitute a membrane-associated active efflux pump of hydrophilic quinolones. This is Quinolone resistance protein NorA (norA) from Staphylococcus aureus (strain MSSA476).